A 62-amino-acid polypeptide reads, in one-letter code: Small ribosomal subunit protein eS17 (62 aa).

This sequence belongs to the eukaryotic ribosomal protein eS17 family.

This chain is Small ribosomal subunit protein eS17, found in Methanoculleus marisnigri (strain ATCC 35101 / DSM 1498 / JR1).